The following is a 690-amino-acid chain: Proprotein convertase subtilisin/kexin type 9 (690 aa).

The signal sequence occupies residues 1-28 (MGTVSSRRSWWPLPLLLLLLLGPAGARA). Positions 29 to 150 (QEDEDGDYEE…IEEDSSVFAQ (122 aa)) are excised as a propeptide. The residue at position 36 (Y36) is a Sulfotyrosine. S45 is modified (phosphoserine). Positions 75 to 147 (TYVVVLKEET…VDYIEEDSSV (73 aa)) constitute an Inhibitor I9 domain. The 307-residue stretch at 153–459 (PWNLERITPP…GWQLFCRTVW (307 aa)) folds into the Peptidase S8 domain. Catalysis depends on charge relay system residues D184 and H224. Disulfide bonds link C221–C253 and C321–C356. S384 functions as the Charge relay system in the catalytic mechanism. A C-terminal domain region spans residues 448 to 690 (GAGWQLFCRT…HLAQASQELQ (243 aa)). Cystine bridges form between C455-C525, C475-C524, and C484-C507. N531 is a glycosylation site (N-linked (GlcNAc...) asparagine). Cystine bridges form between C532–C599, C550–C598, C560–C586, C606–C677, C624–C676, and C633–C652. A Phosphoserine modification is found at S686.

This sequence belongs to the peptidase S8 family. Monomer. Can self-associate to form dimers and higher multimers which may have increased LDLR degrading activity. The precursor protein but not the mature protein may form multimers. Interacts with APOB, VLDLR, LRP8/APOER2 and BACE1. The full-length immature form (pro-PCSK9) interacts with SCNN1A, SCNN1B and SCNN1G. The pro-PCSK9 form (via C-terminal domain) interacts with LDLR. Interacts (via the C-terminal domain) with ANXA2 (via repeat Annexin 1); the interaction inhibits the degradation of LDLR. Ca(2+) serves as cofactor. Post-translationally, cleavage by furin and PCSK5 generates a truncated inactive protein that is unable to induce LDLR degradation. In terms of processing, undergoes autocatalytic cleavage in the endoplasmic reticulum to release the propeptide from the N-terminus and the cleavage of the propeptide is strictly required for its maturation and activation. The cleaved propeptide however remains associated with the catalytic domain through non-covalent interactions, preventing potential substrates from accessing its active site. As a result, it is secreted from cells as a propeptide-containing, enzymatically inactive protein. Phosphorylation protects the propeptide against proteolysis.

Its subcellular location is the cytoplasm. It localises to the secreted. It is found in the endosome. The protein resides in the lysosome. The protein localises to the cell surface. Its subcellular location is the endoplasmic reticulum. It localises to the golgi apparatus. Its activity is regulated as follows. Its proteolytic activity is autoinhibited by the non-covalent binding of the propeptide to the catalytic domain. Inhibited by EGTA. In terms of biological role, crucial player in the regulation of plasma cholesterol homeostasis. Binds to low-density lipid receptor family members: low density lipoprotein receptor (LDLR), very low density lipoprotein receptor (VLDLR), apolipoprotein E receptor (LRP1/APOER) and apolipoprotein receptor 2 (LRP8/APOER2), and promotes their degradation in intracellular acidic compartments. Acts via a non-proteolytic mechanism to enhance the degradation of the hepatic LDLR through a clathrin LDLRAP1/ARH-mediated pathway. May prevent the recycling of LDLR from endosomes to the cell surface or direct it to lysosomes for degradation. Can induce ubiquitination of LDLR leading to its subsequent degradation. Inhibits intracellular degradation of APOB via the autophagosome/lysosome pathway in a LDLR-independent manner. Involved in the disposal of non-acetylated intermediates of BACE1 in the early secretory pathway. Inhibits epithelial Na(+) channel (ENaC)-mediated Na(+) absorption by reducing ENaC surface expression primarily by increasing its proteasomal degradation. Regulates neuronal apoptosis via modulation of LRP8/APOER2 levels and related anti-apoptotic signaling pathways. The sequence is that of Proprotein convertase subtilisin/kexin type 9 (PCSK9) from Pongo pygmaeus (Bornean orangutan).